Consider the following 195-residue polypeptide: HTH-type transcriptional regulator BetI (195 aa).

The HTH tetR-type domain occupies Ser8–Leu68. Positions Thr31 to Phe50 form a DNA-binding region, H-T-H motif.

The protein operates within amine and polyamine biosynthesis; betaine biosynthesis via choline pathway [regulation]. Functionally, repressor involved in the biosynthesis of the osmoprotectant glycine betaine. It represses transcription of the choline transporter BetT and the genes of BetAB involved in the synthesis of glycine betaine. In Shigella flexneri serotype 5b (strain 8401), this protein is HTH-type transcriptional regulator BetI.